The chain runs to 149 residues: Transcriptional repressor NrdR (149 aa).

The segment at 3 to 34 (CPFCGFEESKVVDSRSTDDNTTIRRRRECLKC) is a zinc-finger region. An ATP-cone domain is found at 49–139 (ILVIKKDLTR…VYRQFKDIDT (91 aa)).

Belongs to the NrdR family. Requires Zn(2+) as cofactor.

In terms of biological role, negatively regulates transcription of bacterial ribonucleotide reductase nrd genes and operons by binding to NrdR-boxes. The polypeptide is Transcriptional repressor NrdR (Clostridium beijerinckii (strain ATCC 51743 / NCIMB 8052) (Clostridium acetobutylicum)).